The following is a 482-amino-acid chain: tRNA sulfurtransferase (482 aa).

In terms of domain architecture, THUMP spans 61–165 (VQICDALTRI…QDVLILVKAR (105 aa)). Residues 183 to 184 (LI), K265, G287, and Q296 contribute to the ATP site. The cysteines at positions 344 and 456 are disulfide-linked. One can recognise a Rhodanese domain in the interval 404-482 (FAPTDVLLDI…GFDNVKVYRP (79 aa)). The Cysteine persulfide intermediate role is filled by C456.

The protein belongs to the ThiI family.

The protein resides in the cytoplasm. It catalyses the reaction [ThiI sulfur-carrier protein]-S-sulfanyl-L-cysteine + a uridine in tRNA + 2 reduced [2Fe-2S]-[ferredoxin] + ATP + H(+) = [ThiI sulfur-carrier protein]-L-cysteine + a 4-thiouridine in tRNA + 2 oxidized [2Fe-2S]-[ferredoxin] + AMP + diphosphate. The catalysed reaction is [ThiS sulfur-carrier protein]-C-terminal Gly-Gly-AMP + S-sulfanyl-L-cysteinyl-[cysteine desulfurase] + AH2 = [ThiS sulfur-carrier protein]-C-terminal-Gly-aminoethanethioate + L-cysteinyl-[cysteine desulfurase] + A + AMP + 2 H(+). It participates in cofactor biosynthesis; thiamine diphosphate biosynthesis. Functionally, catalyzes the ATP-dependent transfer of a sulfur to tRNA to produce 4-thiouridine in position 8 of tRNAs, which functions as a near-UV photosensor. Also catalyzes the transfer of sulfur to the sulfur carrier protein ThiS, forming ThiS-thiocarboxylate. This is a step in the synthesis of thiazole, in the thiamine biosynthesis pathway. The sulfur is donated as persulfide by IscS. This chain is tRNA sulfurtransferase, found in Photorhabdus laumondii subsp. laumondii (strain DSM 15139 / CIP 105565 / TT01) (Photorhabdus luminescens subsp. laumondii).